Consider the following 212-residue polypeptide: Imidazole glycerol phosphate synthase subunit HisH (212 aa).

The 210-residue stretch at 3–212 (TVAVIDYGMG…QNFAAWDGRW (210 aa)) folds into the Glutamine amidotransferase type-1 domain. Cys-81 functions as the Nucleophile in the catalytic mechanism. Residues His-190 and Glu-192 contribute to the active site.

As to quaternary structure, heterodimer of HisH and HisF.

The protein resides in the cytoplasm. It catalyses the reaction 5-[(5-phospho-1-deoxy-D-ribulos-1-ylimino)methylamino]-1-(5-phospho-beta-D-ribosyl)imidazole-4-carboxamide + L-glutamine = D-erythro-1-(imidazol-4-yl)glycerol 3-phosphate + 5-amino-1-(5-phospho-beta-D-ribosyl)imidazole-4-carboxamide + L-glutamate + H(+). It carries out the reaction L-glutamine + H2O = L-glutamate + NH4(+). It participates in amino-acid biosynthesis; L-histidine biosynthesis; L-histidine from 5-phospho-alpha-D-ribose 1-diphosphate: step 5/9. Its function is as follows. IGPS catalyzes the conversion of PRFAR and glutamine to IGP, AICAR and glutamate. The HisH subunit catalyzes the hydrolysis of glutamine to glutamate and ammonia as part of the synthesis of IGP and AICAR. The resulting ammonia molecule is channeled to the active site of HisF. This is Imidazole glycerol phosphate synthase subunit HisH from Pseudomonas savastanoi pv. phaseolicola (strain 1448A / Race 6) (Pseudomonas syringae pv. phaseolicola (strain 1448A / Race 6)).